Reading from the N-terminus, the 569-residue chain is ATP-dependent RNA helicase dhh1 (569 aa).

Residues 1–16 (MSDQLADQLKATSLSS) show a composition bias toward polar residues. The tract at residues 1–39 (MSDQLADQLKATSLSSGPEDWKKGLNLPARDTRQQTEDV) is disordered. Positions 45 to 73 (LDWEDFIHDRDLLMGIFEAGFEKPSPIQE) match the Q motif motif. The Helicase ATP-binding domain occupies 76 to 246 (IPVALTGRDI…DKNMTSPYEI (171 aa)). Residue 89–96 (AKNGTGKT) participates in ATP binding. Positions 194-197 (DEAD) match the DEAD box motif. In terms of domain architecture, Helicase C-terminal spans 256-416 (GITQYYAFVE…PIPQTIDKSL (161 aa)). The segment at 436–569 (AQQPQQQLQQ…GQPQGPLSAQ (134 aa)) is disordered. The segment covering 437–482 (QQPQQQLQQSQRPQQSQQQQHFSTQTQPSNQLPPQQGNQQLGFNPQ) has biased composition (low complexity). The span at 495 to 520 (GDWQGQNGRQNGTGASNNQPRPTNYQ) shows a compositional bias: polar residues. A compositionally biased stretch (gly residues) spans 529–542 (SRGGRGRGFQGQGG). A compositionally biased stretch (low complexity) spans 543-569 (RQNQNYGGQRGPRTQGQGQPQGPLSAQ).

This sequence belongs to the DEAD box helicase family. DDX6/DHH1 subfamily.

It localises to the cytoplasm. Its subcellular location is the P-body. It catalyses the reaction ATP + H2O = ADP + phosphate + H(+). In terms of biological role, ATP-dependent RNA helicase involved in mRNA turnover, and more specifically in mRNA decapping. Is involved in G1/S DNA-damage checkpoint recovery, probably through the regulation of the translational status of a subset of mRNAs. May also have a role in translation and mRNA nuclear export. This Neurospora crassa (strain ATCC 24698 / 74-OR23-1A / CBS 708.71 / DSM 1257 / FGSC 987) protein is ATP-dependent RNA helicase dhh1 (drh-10).